The sequence spans 153 residues: Superoxide dismutase [Cu-Zn] (153 aa).

The Cu cation site is built by histidine 46, histidine 48, and histidine 63. Cysteine 57 and cysteine 146 are joined by a disulfide. The interval 61–80 (GPHFNPFGKEHGAPEDENRH) is disordered. Zn(2+)-binding residues include histidine 63, histidine 71, histidine 80, and aspartate 83. Positions 68–80 (GKEHGAPEDENRH) are enriched in basic and acidic residues. A Cu cation-binding site is contributed by histidine 120. Residues 124-136 (DDLGRSEHPESKK) show a composition bias toward basic and acidic residues. Residues 124–143 (DDLGRSEHPESKKTGNAGAR) form a disordered region. Arginine 143 is a substrate binding site.

The protein belongs to the Cu-Zn superoxide dismutase family. As to quaternary structure, homodimer. The cofactor is Cu cation. Zn(2+) is required as a cofactor.

Its subcellular location is the cytoplasm. It catalyses the reaction 2 superoxide + 2 H(+) = H2O2 + O2. In terms of biological role, destroys radicals which are normally produced within the cells and which are toxic to biological systems. The chain is Superoxide dismutase [Cu-Zn] (sodC) from Aspergillus flavus.